A 243-amino-acid polypeptide reads, in one-letter code: Vimentin A2 (243 aa).

The tract at residues 1–22 is coil 1B; that stretch reads GFSLQDELDFLKKLHDEELADV. Positions 1–188 constitute an IF rod domain; it reads GFSLQDELDF…KLLEGEESRI (188 aa). The linker 12 stretch occupies residues 23–45; the sequence is QAQIQDQQVQVDMDMAKPDLTAA. Residues 46-184 are coil 2; sequence LRDVRLQYEN…ATYRKLLEGE (139 aa). The tract at residues 185-243 is tail; it reads ESRITTPLPNLSSFNLRDAILETKPILENTFSKKVLIKTIETRDGEVINESTQNHDDLE.

The protein belongs to the intermediate filament family. As to quaternary structure, homomer. Post-translationally, one of the most prominent phosphoproteins in various cells of mesenchymal origin. Phosphorylation is enhanced during cell division, at which time vimentin filaments are significantly reorganized. Expressed in low amounts in retina, optic nerve, and brain and in higher amounts in spinal cord.

Its function is as follows. Vimentins are class-III intermediate filaments found in various non-epithelial cells, especially mesenchymal cells. Vimentin is attached to the nucleus, endoplasmic reticulum, and mitochondria, either laterally or terminally. The sequence is that of Vimentin A2 from Carassius auratus (Goldfish).